The following is a 1329-amino-acid chain: Synergin gamma (1329 aa).

The stretch at 112 to 152 (MQKQFAEEQQKRFEQQQKLLEEERKRRQFEEQKQKLRLLSS) forms a coiled coil. Residues 175 to 211 (GFSRDAKMHPTPASHPKKPDCPTSSHSTKTVSPSSAF) form a disordered region. Residues 197 to 209 (TSSHSTKTVSPSS) are compositionally biased toward low complexity. In terms of domain architecture, EH spans 393–504 (NESLVPDAYK…TPVSQPTAMT (112 aa)). A DFXDF motif 1 motif is present at residues 555-559 (DFQDF). The residue at position 571 (serine 571) is a Phosphoserine. Over residues 578–594 (VPASSKTSNSQHGNSAP) the composition is skewed to polar residues. The interval 578–600 (VPASSKTSNSQHGNSAPSLLIPL) is disordered. The residue at position 609 (lysine 609) is an N6-acetyllysine. The interaction with AP1G1 stretch occupies residues 614–878 (KGISAEKPSE…ADFHSSKFSS (265 aa)). Disordered regions lie at residues 661–701 (GTDD…TQTQ) and 730–753 (AFSTSKSVSSRPQPAGSAAAPASL). Serine 676 is subject to Phosphoserine. An interaction with AP1G1, AP1G2 and GGA1 region spans residues 761–773 (LADDFGEFNLFGE). The DFXDF motif 2 signature appears at 785–789 (DFADF). A disordered region spans residues 797–835 (IPSEPKADDKYEALREEGSPGALSTSTVEGAHNPPVSSS). Basic and acidic residues predominate over residues 801-814 (PKADDKYEALREEG). The residue at position 815 (serine 815) is a Phosphoserine. Lysine 836 bears the N6-acetyllysine mark. 2 positions are modified to phosphoserine: serine 844 and serine 864. Disordered stretches follow at residues 856–922 (KENT…DSED), 941–1042 (HVMS…FGEF), and 1088–1113 (SLSLGDKEISRSSPSPALEQPFRDRS). Residues 864-873 (SDGDFADFHS) are compositionally biased toward basic and acidic residues. The short motif at 867–871 (DFADF) is the DFXDF motif 3 element. The span at 874–883 (SKFSSTSSDK) shows a compositional bias: low complexity. Serine 904, serine 944, serine 947, serine 997, serine 1021, serine 1088, serine 1090, serine 1102, and serine 1113 each carry phosphoserine. Polar residues predominate over residues 944–955 (SDSSLDLPTVSG). Positions 1016-1028 (ENTCPSPASSVAS) are enriched in polar residues. Residue threonine 1115 is modified to Phosphothreonine.

In terms of assembly, self-associates. Interacts with GGA1 (via GAE domain). Interacts with GGA2 and GGA3. Interacts with AP1G1 (via GAE domain), a subunit of adapter protein complex AP-1. Interacts with AP1G2 (via GAE domain) a subunit of adapter protein complex AP-1. Component of the aftiphilin/p200/gamma-synergin complex, at least composed of AFTPH/aftiphilin, HEATR5B/p200a and SYNRG/gamma-synergin, which plays a role in the AP1G1/AP-1-mediated trafficking of transferrin from early to recycling endosomes. Within the complex interacts with AFTPH/aftiphilin and HEATR5B/p200a; the interactions are direct. Interacts (via EH domain) with SCAMP1. As to expression, detected in brain and liver (at protein level). Ubiquitously expressed.

Its subcellular location is the cytoplasm. It localises to the golgi apparatus. The protein localises to the trans-Golgi network membrane. It is found in the perinuclear region. The protein resides in the cytoplasmic vesicle. Its subcellular location is the clathrin-coated vesicle. Plays a role in endocytosis and/or membrane trafficking at the trans-Golgi network (TGN). May act by linking the adapter protein complex AP-1 to other proteins. Component of clathrin-coated vesicles. Component of the aftiphilin/p200/gamma-synergin complex, which plays roles in AP1G1/AP-1-mediated protein trafficking including the trafficking of transferrin from early to recycling endosomes, and the membrane trafficking of furin and the lysosomal enzyme cathepsin D between the trans-Golgi network (TGN) and endosomes. The sequence is that of Synergin gamma (Synrg) from Rattus norvegicus (Rat).